We begin with the raw amino-acid sequence, 183 residues long: Small ribosomal subunit protein uS4c (183 aa).

Positions 82 to 143 constitute an S4 RNA-binding domain; it reads MRLDNILFRL…KQRSKALIQN (62 aa).

The protein belongs to the universal ribosomal protein uS4 family. In terms of assembly, part of the 30S ribosomal subunit. Contacts protein S5. The interaction surface between S4 and S5 is involved in control of translational fidelity.

The protein resides in the plastid. It is found in the chloroplast. Its function is as follows. One of the primary rRNA binding proteins, it binds directly to 16S rRNA where it nucleates assembly of the body of the 30S subunit. With S5 and S12 plays an important role in translational accuracy. This chain is Small ribosomal subunit protein uS4c (rps4), found in Gladiolus communis (Cornflag).